A 258-amino-acid polypeptide reads, in one-letter code: Transmembrane O-methyltransferase homolog (258 aa).

Residues Glu104, 106-107 (GT), Ser112, Glu130, and Ser160 contribute to the S-adenosyl-L-methionine site.

Belongs to the class I-like SAM-binding methyltransferase superfamily. Cation-dependent O-methyltransferase family. Interacts with LHFPL5, PCDH15, TMC1, TMC2 and TMIE. The interaction of TOMT with TMC1 and TMC2 is required for the transportation of TMC1/2 into the stereocilia of hair cells. Interacts directly with TMC1. As to expression, widely expressed with high levels in outer and inner hair cells of the cochlea and vestibule.

It localises to the cytoplasm. It is found in the endoplasmic reticulum. It carries out the reaction a catechol + S-adenosyl-L-methionine = a guaiacol + S-adenosyl-L-homocysteine + H(+). Functionally, catalyzes the O-methylation, and thereby the inactivation, of catecholamine neurotransmitters and catechol hormones. Required for auditory function. Component of the cochlear hair cell's mechanotransduction (MET) machinery. Involved in the assembly of the asymmetric tip-link MET complex. Required for transportation of TMC1 and TMC2 proteins into the mechanically sensitive stereocilia of the hair cells. The function in MET is independent of the enzymatic activity. This chain is Transmembrane O-methyltransferase homolog, found in Mus musculus (Mouse).